We begin with the raw amino-acid sequence, 1058 residues long: Lon protease homolog, mitochondrial (1058 aa).

The transit peptide at 1–47 (MLTRIRNAGVGGNAARRVRLLAGYTGARMAHAAALNSTTGAGGAARA) directs the protein to the mitochondrion. The interval 72 to 151 (GGQCILKQDR…RSNPPSEGEV (80 aa)) is disordered. Basic and acidic residues-rich tracts occupy residues 78–97 (KQDREPDQSDDKKVPPRAEE) and 106–118 (DEEAERQPREEQA). The segment covering 129–142 (GSGGSASSAGGGGR) has biased composition (gly residues). The 255-residue stretch at 158–412 (LMVLPMSNRP…KALVFIKKEV (255 aa)) folds into the Lon N-terminal domain. Position 564-571 (564-571 (GPPGVGKT)) interacts with ATP. The interval 778–814 (TPKSAPAETNIEPENGKPDASAKPLTNNLPAPEPLNI) is disordered. Residues 844-1030 (KTPAGVVMGL…DDVFNVLFGS (187 aa)) enclose the Lon proteolytic domain. Active-site residues include S936 and K979.

It belongs to the peptidase S16 family. In terms of assembly, homohexamer or homoheptamer. Organized in a ring with a central cavity.

The protein resides in the mitochondrion matrix. It catalyses the reaction Hydrolysis of proteins in presence of ATP.. In terms of biological role, ATP-dependent serine protease that mediates the selective degradation of misfolded, unassembled or oxidatively damaged polypeptides as well as certain short-lived regulatory proteins in the mitochondrial matrix. May also have a chaperone function in the assembly of inner membrane protein complexes. Participates in the regulation of mitochondrial gene expression and in the maintenance of the integrity of the mitochondrial genome. Binds to mitochondrial DNA in a site-specific manner. The polypeptide is Lon protease homolog, mitochondrial (Eremothecium gossypii (strain ATCC 10895 / CBS 109.51 / FGSC 9923 / NRRL Y-1056) (Yeast)).